The following is a 276-amino-acid chain: F420-dependent methylenetetrahydromethanopterin dehydrogenase (276 aa).

The disordered stretch occupies residues 253-276 (TVLRTPHGKEGKTLSKKDLLAKPE). Over residues 259–276 (HGKEGKTLSKKDLLAKPE) the composition is skewed to basic and acidic residues.

It belongs to the MTD family. In terms of assembly, found to be tightly associated with methyl-coenzyme M methylreductase.

It carries out the reaction 5,10-methylenetetrahydromethanopterin + oxidized coenzyme F420-(gamma-L-Glu)(n) + 2 H(+) = 5,10-methenyl-5,6,7,8-tetrahydromethanopterin + reduced coenzyme F420-(gamma-L-Glu)(n). It functions in the pathway one-carbon metabolism; methanogenesis from CO(2); 5,10-methylene-5,6,7,8-tetrahydromethanopterin from 5,10-methenyl-5,6,7,8-tetrahydromethanopterin (coenzyme F420 route): step 1/1. With respect to regulation, activity requires salt; 100 mM sodium or potassium salts of chloride, phosphate or sulfate are equally effective. Not inactivated by O(2). Inhibited by hydrogen-producing 5,10-methenyltetrahydromethanopterin hydrogenase which has a higher affinity for their shared substrate. Enzyme is O(2)-stable and strictly dependent on coenzyme F420. Catalyzes the reversible reduction of methenyl-H(4)MPT(+) to methylene-H(4)MPT. The chain is F420-dependent methylenetetrahydromethanopterin dehydrogenase from Methanothermobacter marburgensis (strain ATCC BAA-927 / DSM 2133 / JCM 14651 / NBRC 100331 / OCM 82 / Marburg) (Methanobacterium thermoautotrophicum).